A 503-amino-acid polypeptide reads, in one-letter code: Galactose/methyl galactoside import ATP-binding protein MglA 2 (503 aa).

ABC transporter domains lie at 11-246 (LEMT…VGRE) and 257-503 (TPKE…SRYL). 43–50 (GENGAGKS) is an ATP binding site.

It belongs to the ABC transporter superfamily. Galactose/methyl galactoside importer (TC 3.A.1.2.3) family. In terms of assembly, the complex is composed of one ATP-binding protein (MglA), two transmembrane proteins (MglC) and a solute-binding protein (MglB).

It is found in the cell inner membrane. The enzyme catalyses D-galactose(out) + ATP + H2O = D-galactose(in) + ADP + phosphate + H(+). The catalysed reaction is methyl beta-D-galactoside(out) + ATP + H2O = methyl beta-D-galactoside(in) + ADP + phosphate + H(+). Part of the ABC transporter complex MglABC involved in galactose/methyl galactoside import. Responsible for energy coupling to the transport system. The sequence is that of Galactose/methyl galactoside import ATP-binding protein MglA 2 from Photobacterium profundum (strain SS9).